We begin with the raw amino-acid sequence, 81 residues long: Large ribosomal subunit protein bL31B (81 aa).

The protein belongs to the bacterial ribosomal protein bL31 family. Type B subfamily. Part of the 50S ribosomal subunit.

The chain is Large ribosomal subunit protein bL31B from Pediococcus pentosaceus (strain ATCC 25745 / CCUG 21536 / LMG 10740 / 183-1w).